The sequence spans 226 residues: Glutathione peroxidase 3 (226 aa).

The N-terminal stretch at 1 to 24 (MARLLQASCLLSLLLAGFLPQSRG) is a signal peptide. U73 is an active-site residue. A non-standard amino acid (selenocysteine) is located at residue U73.

The protein belongs to the glutathione peroxidase family. In terms of assembly, homotetramer. As to expression, secreted in plasma.

The protein localises to the secreted. It catalyses the reaction 2 glutathione + H2O2 = glutathione disulfide + 2 H2O. It carries out the reaction tert-butyl hydroperoxide + 2 glutathione = tert-butanol + glutathione disulfide + H2O. Protects cells and enzymes from oxidative damage, by catalyzing the reduction of hydrogen peroxide, lipid peroxides and organic hydroperoxide, by glutathione. The sequence is that of Glutathione peroxidase 3 from Sapajus apella (Brown-capped capuchin).